The sequence spans 295 residues: Protoheme IX farnesyltransferase (295 aa).

Transmembrane regions (helical) follow at residues 43-63 (PIQLALLVLGTSAAAGGVAAL), 92-112 (SAFVLGVLMCIGSLFLLYALV), 114-134 (PLAALFTLLTIFSYLGWYTPA), 140-160 (WSTEIGAVAGAFPPLIGWSAG), 166-186 (ALGWVLFGVLFFWQVPHFMAV), 231-251 (LLWGLTTWFYGVAAAVTGLWF), and 272-292 (FFASIGYLPLVLGALVIDRLF).

This sequence belongs to the UbiA prenyltransferase family. Protoheme IX farnesyltransferase subfamily.

The protein resides in the cell inner membrane. It catalyses the reaction heme b + (2E,6E)-farnesyl diphosphate + H2O = Fe(II)-heme o + diphosphate. Its pathway is porphyrin-containing compound metabolism; heme O biosynthesis; heme O from protoheme: step 1/1. Converts heme B (protoheme IX) to heme O by substitution of the vinyl group on carbon 2 of heme B porphyrin ring with a hydroxyethyl farnesyl side group. The chain is Protoheme IX farnesyltransferase from Opitutus terrae (strain DSM 11246 / JCM 15787 / PB90-1).